Here is a 314-residue protein sequence, read N- to C-terminus: tRNA dimethylallyltransferase (314 aa).

11 to 18 provides a ligand contact to ATP; that stretch reads GPTASGKT. Position 13 to 18 (13 to 18) interacts with substrate; it reads TASGKT. Interaction with substrate tRNA regions lie at residues 36–39, 160–164, 241–246, and 274–281; these read DSAL, QRINR, RCVGYR, and KRQITWLR.

It belongs to the IPP transferase family. In terms of assembly, monomer. Mg(2+) serves as cofactor.

It catalyses the reaction adenosine(37) in tRNA + dimethylallyl diphosphate = N(6)-dimethylallyladenosine(37) in tRNA + diphosphate. Its function is as follows. Catalyzes the transfer of a dimethylallyl group onto the adenine at position 37 in tRNAs that read codons beginning with uridine, leading to the formation of N6-(dimethylallyl)adenosine (i(6)A). In Glaesserella parasuis serovar 5 (strain SH0165) (Haemophilus parasuis), this protein is tRNA dimethylallyltransferase.